Here is a 683-residue protein sequence, read N- to C-terminus: DNA ligase (683 aa).

Residues 42–46, 91–92, and glutamate 122 each bind NAD(+); these read DAEYD and SL. The N6-AMP-lysine intermediate role is filled by lysine 124. NAD(+)-binding residues include arginine 145, glutamate 182, lysine 299, and lysine 323. Cysteine 417, cysteine 420, cysteine 435, and cysteine 441 together coordinate Zn(2+). In terms of domain architecture, BRCT spans 602–683; that stretch reads APQGVLAGKT…MRKLLEGQTT (82 aa).

This sequence belongs to the NAD-dependent DNA ligase family. LigA subfamily. It depends on Mg(2+) as a cofactor. Requires Mn(2+) as cofactor.

It carries out the reaction NAD(+) + (deoxyribonucleotide)n-3'-hydroxyl + 5'-phospho-(deoxyribonucleotide)m = (deoxyribonucleotide)n+m + AMP + beta-nicotinamide D-nucleotide.. Its function is as follows. DNA ligase that catalyzes the formation of phosphodiester linkages between 5'-phosphoryl and 3'-hydroxyl groups in double-stranded DNA using NAD as a coenzyme and as the energy source for the reaction. It is essential for DNA replication and repair of damaged DNA. In Paraburkholderia phymatum (strain DSM 17167 / CIP 108236 / LMG 21445 / STM815) (Burkholderia phymatum), this protein is DNA ligase.